A 292-amino-acid polypeptide reads, in one-letter code: Ubiquinone biosynthesis protein UbiV (292 aa).

[4Fe-4S] cluster contacts are provided by Cys-39, Cys-180, Cys-193, and Cys-197.

Belongs to the peptidase U32 family. UbiV subfamily. In terms of assembly, forms a heterodimer with UbiU. Requires [4Fe-4S] cluster as cofactor.

The protein operates within cofactor biosynthesis; ubiquinone biosynthesis. In terms of biological role, required for O(2)-independent ubiquinone (coenzyme Q) biosynthesis. Together with UbiU, is essential for the C6-hydroxylation reaction in the oxygen-independent ubiquinone biosynthesis pathway. This Escherichia coli (strain K12) protein is Ubiquinone biosynthesis protein UbiV.